The chain runs to 350 residues: DNA-directed RNA polymerase subunit alpha (350 aa).

Positions 1 to 226 are alpha N-terminal domain (alpha-NTD); sequence MLISQRPTLS…ELFGLARELN (226 aa). The alpha C-terminal domain (alpha-CTD) stretch occupies residues 241–350; that stretch reads ADQAAHFALP…NQDYAETEQL (110 aa). Residues 328-350 are disordered; it reads GTWNSDAGYDLEDNQDYAETEQL. The segment covering 336–350 has biased composition (acidic residues); the sequence is YDLEDNQDYAETEQL.

It belongs to the RNA polymerase alpha chain family. Homodimer. The RNAP catalytic core consists of 2 alpha, 1 beta, 1 beta' and 1 omega subunit. When a sigma factor is associated with the core the holoenzyme is formed, which can initiate transcription.

The catalysed reaction is RNA(n) + a ribonucleoside 5'-triphosphate = RNA(n+1) + diphosphate. DNA-dependent RNA polymerase catalyzes the transcription of DNA into RNA using the four ribonucleoside triphosphates as substrates. This chain is DNA-directed RNA polymerase subunit alpha, found in Mycolicibacterium vanbaalenii (strain DSM 7251 / JCM 13017 / BCRC 16820 / KCTC 9966 / NRRL B-24157 / PYR-1) (Mycobacterium vanbaalenii).